We begin with the raw amino-acid sequence, 475 residues long: Glutamate--tRNA ligase 1 (475 aa).

A 'HIGH' region motif is present at residues 11–21; the sequence is PSPTGYLHIGG. The short motif at 240–244 is the 'KMSKS' region element; sequence KLSKR. Position 243 (Lys243) interacts with ATP.

It belongs to the class-I aminoacyl-tRNA synthetase family. Glutamate--tRNA ligase type 1 subfamily. Monomer.

The protein localises to the cytoplasm. It catalyses the reaction tRNA(Glu) + L-glutamate + ATP = L-glutamyl-tRNA(Glu) + AMP + diphosphate. Catalyzes the attachment of glutamate to tRNA(Glu) in a two-step reaction: glutamate is first activated by ATP to form Glu-AMP and then transferred to the acceptor end of tRNA(Glu). This Methylobacterium radiotolerans (strain ATCC 27329 / DSM 1819 / JCM 2831 / NBRC 15690 / NCIMB 10815 / 0-1) protein is Glutamate--tRNA ligase 1.